A 243-amino-acid chain; its full sequence is Orotidine 5'-phosphate decarboxylase (243 aa).

Substrate contacts are provided by residues Asp-19, Lys-41, 69–78, Thr-124, Arg-185, Gln-194, Gly-214, and Arg-215; that span reads DLKFFDIPAT. Lys-71 functions as the Proton donor in the catalytic mechanism.

This sequence belongs to the OMP decarboxylase family. Type 1 subfamily. As to quaternary structure, homodimer.

The enzyme catalyses orotidine 5'-phosphate + H(+) = UMP + CO2. The protein operates within pyrimidine metabolism; UMP biosynthesis via de novo pathway; UMP from orotate: step 2/2. In terms of biological role, catalyzes the decarboxylation of orotidine 5'-monophosphate (OMP) to uridine 5'-monophosphate (UMP). This Xanthomonas axonopodis pv. citri (strain 306) protein is Orotidine 5'-phosphate decarboxylase.